Here is a 307-residue protein sequence, read N- to C-terminus: L-carnitine dehydrogenase (307 aa).

Gly8 to Gly13 is a binding site for NAD(+).

The protein belongs to the 3-hydroxyacyl-CoA dehydrogenase family. L-carnitine dehydrogenase subfamily. As to quaternary structure, homodimer.

It is found in the cytoplasm. The enzyme catalyses carnitine + NAD(+) = 3-dehydrocarnitine + NADH + H(+). It functions in the pathway amine and polyamine metabolism; carnitine metabolism. Functionally, catalyzes the NAD(+)-dependent oxidation of L-carnitine to 3-dehydrocarnitine. In Oceanobacillus iheyensis (strain DSM 14371 / CIP 107618 / JCM 11309 / KCTC 3954 / HTE831), this protein is L-carnitine dehydrogenase.